The primary structure comprises 224 residues: MTNFQVAIDGPASAGKSTIAKILATKLNYVYVDTGAMYRTITLAAKKNGIAYNDEEKIKNLLSQTEIRFEPSTPVQRVFLNDTDVTEEIRSAEVTNNVSVVASFADVRSNLVNRQREIANNNSVIMDGRDIGTTVLPEADVKIFLVASVDERAQRRYKENVAKGMTTDLETLKREIEARDYKDSHRQISPLTQAKDAILVDTTGQSIDDVVAKIANIIENNISF.

10 to 18 is an ATP binding site; the sequence is GPASAGKST.

The protein belongs to the cytidylate kinase family. Type 1 subfamily.

It is found in the cytoplasm. It carries out the reaction CMP + ATP = CDP + ADP. The catalysed reaction is dCMP + ATP = dCDP + ADP. The chain is Cytidylate kinase from Leuconostoc mesenteroides subsp. mesenteroides (strain ATCC 8293 / DSM 20343 / BCRC 11652 / CCM 1803 / JCM 6124 / NCDO 523 / NBRC 100496 / NCIMB 8023 / NCTC 12954 / NRRL B-1118 / 37Y).